A 259-amino-acid chain; its full sequence is Pimeloyl-[acyl-carrier protein] methyl ester esterase (259 aa).

An AB hydrolase-1 domain is found at His15–Pro242. Substrate contacts are provided by residues Trp22, Ser82–Leu83, and Phe143–Gln147. Ser82 functions as the Nucleophile in the catalytic mechanism. Catalysis depends on residues Asp207 and His235. Residue His235 coordinates substrate.

This sequence belongs to the AB hydrolase superfamily. Carboxylesterase BioH family. As to quaternary structure, monomer.

It is found in the cytoplasm. It catalyses the reaction 6-carboxyhexanoyl-[ACP] methyl ester + H2O = 6-carboxyhexanoyl-[ACP] + methanol + H(+). Its pathway is cofactor biosynthesis; biotin biosynthesis. The physiological role of BioH is to remove the methyl group introduced by BioC when the pimeloyl moiety is complete. It allows to synthesize pimeloyl-ACP via the fatty acid synthetic pathway through the hydrolysis of the ester bonds of pimeloyl-ACP esters. The sequence is that of Pimeloyl-[acyl-carrier protein] methyl ester esterase from Cronobacter sakazakii (strain ATCC BAA-894) (Enterobacter sakazakii).